The primary structure comprises 346 residues: B3 domain-containing protein At5g60142 (346 aa).

The TF-B3 DNA-binding region spans 13–109 (PKFFKVYLPD…CFNFCIYGRA (97 aa)). Disordered regions lie at residues 158-179 (QDYN…ADND) and 192-243 (TSSE…HDRQ). The span at 192 to 217 (TSSEDIIVIDDDDDDDDQDYGDDDHA) shows a compositional bias: acidic residues. Basic and acidic residues predominate over residues 218–229 (DVEKERWRGVKT).

It is found in the nucleus. The polypeptide is B3 domain-containing protein At5g60142 (Arabidopsis thaliana (Mouse-ear cress)).